We begin with the raw amino-acid sequence, 417 residues long: Snake venom metalloproteinase aculysin-1 (417 aa).

The signal sequence occupies residues 1-20 (MIQVLLVTICLAAFPYQGSS). A propeptide spanning residues 21–189 (IMLESGKVND…KKPSWLNLTP (169 aa)) is cleaved from the precursor. The region spanning 197–392 (TSVNLQLIVD…KKPKCIHKKS (196 aa)) is the Peptidase M12B domain. Disulfide bonds link Cys-308–Cys-387, Cys-349–Cys-371, and Cys-351–Cys-354. Position 333 (His-333) interacts with Zn(2+). Glu-334 is an active-site residue. Residues His-337 and His-343 each contribute to the Zn(2+) site. Positions 393-417 (LKTDTVSTSVSGNEPLDDNVDGFHA) are excised as a propeptide. The interval 398–417 (VSTSVSGNEPLDDNVDGFHA) is disordered. Over residues 407–417 (PLDDNVDGFHA) the composition is skewed to acidic residues.

It belongs to the venom metalloproteinase (M12B) family. P-I subfamily. In terms of assembly, monomer. Requires Zn(2+) as cofactor. Expressed by the venom gland.

The protein localises to the secreted. Its function is as follows. This protein is an alkaline zinc metalloprotease from snake venom that possesses weak hemorrhagic activity. The chain is Snake venom metalloproteinase aculysin-1 from Deinagkistrodon acutus (Hundred-pace snake).